The sequence spans 403 residues: Accessory Sec system protein translocase subunit SecY2 (403 aa).

The next 10 helical transmembrane spans lie at 17–37, 63–83, 105–125, 131–151, 157–177, 186–206, 240–260, 276–296, 339–359, and 366–386; these read MLYT…SIVS, LNIF…LMLI, ILTL…YVSK, DNIY…VWLA, YGIA…MMHQ, HIVI…LLFI, ITLM…HFIL, FDSP…GYFL, WFGS…TLFV, and IYFS…AETI.

Belongs to the SecY/SEC61-alpha family. SecY2 subfamily. As to quaternary structure, component of the accessory SecA2/SecY2 protein translocase complex required to export cell wall proteins. May form heterotrimers with SecE and SecG subunits.

Its subcellular location is the cell membrane. Its function is as follows. Part of the accessory SecA2/SecY2 system specifically required for export of possible cell wall proteins. The central subunit of a protein translocation channel. The chain is Accessory Sec system protein translocase subunit SecY2 from Staphylococcus aureus (strain N315).